The following is a 34-amino-acid chain: Surfactant protein C (34 aa).

A lipid anchor (S-palmitoyl cysteine) is attached at Cys-4.

It localises to the secreted. Its subcellular location is the extracellular space. The protein localises to the surface film. Functionally, pulmonary surfactant associated proteins promote alveolar stability by lowering the surface tension at the air-liquid interface in the peripheral air spaces. The protein is Surfactant protein C (SFTPC) of Canis lupus familiaris (Dog).